A 1406-amino-acid chain; its full sequence is Enhancer of mRNA-decapping protein 4 (1406 aa).

An N-acetylalanine modification is found at alanine 2. Residues serine 3 and serine 6 each carry the phosphoserine modification. N6-acetyllysine is present on lysine 125. 4 WD repeats span residues 174 to 214 (GFTG…GKIQ), 230 to 277 (NHFR…SSHN), 295 to 334 (GHST…QDEP), and 342 to 393 (PHDG…CLQT). Residues serine 560, serine 565, serine 583, and serine 585 each carry the phosphoserine modification. 2 disordered regions span residues 604-631 (SLQQ…SSSS) and 667-686 (SLTL…SLLP). Over residues 609–631 (SASPSSSSSSSSSSSSSSSSSSS) the composition is skewed to low complexity. Phosphoserine is present on residues serine 680, serine 712, serine 727, and serine 729. Positions 719–744 (EPLGLPQASPSRTRSPDVISSASTAL) are disordered. The span at 726-744 (ASPSRTRSPDVISSASTAL) shows a compositional bias: polar residues. Phosphothreonine is present on threonine 731. Residues serine 733 and serine 745 each carry the phosphoserine modification. 2 disordered regions span residues 782–855 (HLLS…NGLQ) and 873–951 (QRDS…VAEP). Composition is skewed to polar residues over residues 823-832 (EVATPDSQVW) and 841-852 (ETCSTLTESPRN). The residue at position 826 (threonine 826) is a Phosphothreonine. Phosphoserine occurs at positions 849 and 876. Threonine 879 is modified (phosphothreonine). Residues serine 880, serine 884, serine 892, serine 895, and serine 897 each carry the phosphoserine modification. Threonine 906 carries the post-translational modification Phosphothreonine. Residues 971–1030 (HNQEELLQRLCAQLEGLQSTVTDHVERALETRHEQEQRRLERALAEGQQRGGQLQEQLTQ) adopt a coiled-coil conformation. Serine 1385 is modified (phosphoserine).

It belongs to the WD repeat EDC4 family. Part of a decapping complex consisting of DCP1A, DCP2, EDC3, EDC4 and probably DDX6. Part of a complex consisting of DCP1A, EDC3, EDC4 and DDX6. Part of a complex consisting of DCP1B, EDC3, EDC4 and DDX6. Interacts with DCP2. Interacts with RC3H1. Interacts with NBDY. Interacts with Tex19.1 and, probably, Tex19.2. Interacts with LSM14A. Interacts with DDX6.

The protein localises to the cytoplasm. Its subcellular location is the P-body. It is found in the nucleus. Functionally, in the process of mRNA degradation, seems to play a role in mRNA decapping. Component of a complex containing DCP2 and DCP1A which functions in decapping of ARE-containing mRNAs. Promotes complex formation between DCP1A and DCP2. Enhances the catalytic activity of DCP2 (in vitro). This chain is Enhancer of mRNA-decapping protein 4, found in Mus musculus (Mouse).